Consider the following 545-residue polypeptide: DnaJ homolog subfamily C member 21 (545 aa).

A J domain is found at 3-69 (CHYEVLGVKR…QERAWYDNHR (67 aa)). 4 disordered regions span residues 122–141 (EKEH…SFGE), 276–302 (EYGQ…IANV), 331–497 (SFKS…KEVN), and 522–545 (HATA…RKNR). 2 stretches are compositionally biased toward acidic residues: residues 129–141 (EEDE…SFGE) and 283–295 (DASD…EELE). Residues 180 to 286 (RWEKRAMEKE…YGQEFGDASD (107 aa)) are a coiled coil. Residues 323 to 347 (LYCPACDKSFKSDKAMKNHSKSKKH) form a C2H2-type 1 zinc finger. Positions 339–348 (KNHSKSKKHR) are enriched in basic residues. A compositionally biased stretch (acidic residues) spans 372–388 (REEDDEEEDDDDDDEQN). The span at 394–406 (KLSKRQKKKKRLQ) shows a compositional bias: basic residues. The segment at 498–522 (LRCVTCQYEFTTRNKLFDHLKSTGH) adopts a C2H2-type 2 zinc-finger fold. Basic residues predominate over residues 535–545 (SKKKKDSRKNR).

Its function is as follows. May act as a co-chaperone for HSP70. This Danio rerio (Zebrafish) protein is DnaJ homolog subfamily C member 21 (dnajc21).